The primary structure comprises 207 residues: Uridine kinase (207 aa).

ATP is bound at residue 11–18 (GGSGSGKT).

Belongs to the uridine kinase family.

The protein resides in the cytoplasm. The catalysed reaction is uridine + ATP = UMP + ADP + H(+). It carries out the reaction cytidine + ATP = CMP + ADP + H(+). It functions in the pathway pyrimidine metabolism; CTP biosynthesis via salvage pathway; CTP from cytidine: step 1/3. The protein operates within pyrimidine metabolism; UMP biosynthesis via salvage pathway; UMP from uridine: step 1/1. The sequence is that of Uridine kinase from Staphylococcus epidermidis (strain ATCC 35984 / DSM 28319 / BCRC 17069 / CCUG 31568 / BM 3577 / RP62A).